Here is a 196-residue protein sequence, read N- to C-terminus: Probable thymidylate kinase (196 aa).

An ATP-binding site is contributed by 7-14; sequence GIDGSGKS.

It belongs to the thymidylate kinase family.

The enzyme catalyses dTMP + ATP = dTDP + ADP. This chain is Probable thymidylate kinase, found in Natronomonas pharaonis (strain ATCC 35678 / DSM 2160 / CIP 103997 / JCM 8858 / NBRC 14720 / NCIMB 2260 / Gabara) (Halobacterium pharaonis).